A 233-amino-acid polypeptide reads, in one-letter code: Glycerol-3-phosphate acyltransferase 5 (233 aa).

A run of 5 helical transmembrane segments spans residues 3–23 (LVFIIMAIAGYLVGAIPMAYL), 69–89 (MILLSGALGLALWQQIVVGLF), 116–136 (LVMAPVPALIALGTAIAFGLF), 143–163 (VFLGVAALPFMSGYFHGFFGI), and 168–188 (TISWGFIGIFLIMVTRRLMAP).

Belongs to the PlsY family. As to quaternary structure, probably interacts with PlsX.

It is found in the cell membrane. It catalyses the reaction an acyl phosphate + sn-glycerol 3-phosphate = a 1-acyl-sn-glycero-3-phosphate + phosphate. It functions in the pathway lipid metabolism; phospholipid metabolism. Functionally, catalyzes the transfer of an acyl group from acyl-phosphate (acyl-PO(4)) to glycerol-3-phosphate (G3P) to form lysophosphatidic acid (LPA). This enzyme utilizes acyl-phosphate as fatty acyl donor, but not acyl-CoA or acyl-ACP. In Dehalococcoides mccartyi (strain ATCC BAA-2266 / KCTC 15142 / 195) (Dehalococcoides ethenogenes (strain 195)), this protein is Glycerol-3-phosphate acyltransferase 5.